The sequence spans 162 residues: Protein archease (162 aa).

3 residues coordinate Ca(2+): Asp-34, Asp-161, and Ile-162.

The protein belongs to the archease family. Component of the tRNA-splicing ligase complex.

In terms of biological role, component of the tRNA-splicing ligase complex required to facilitate the enzymatic turnover of catalytic subunit RTCB. Together with ddx1, acts by facilitating the guanylylation of RTCB, a key intermediate step in tRNA ligation. The chain is Protein archease (zbtb8os) from Danio rerio (Zebrafish).